We begin with the raw amino-acid sequence, 281 residues long: Nicotinamide/nicotinic acid mononucleotide adenylyltransferase 1 (281 aa).

Gly-15 and Ser-16 together coordinate beta-nicotinamide D-ribonucleotide. 4 residues coordinate NAD(+): Gly-15, Ser-16, Phe-17, and Met-23. 15–17 lines the ATP pocket; the sequence is GSF. ATP is bound at residue His-24. 2 residues coordinate beta-nicotinamide D-ribonucleotide: Tyr-55 and Lys-57. Lys-57 contributes to the NAD(+) binding site. Position 58 (Lys-58) interacts with ATP. Beta-nicotinamide D-ribonucleotide contacts are provided by Trp-92 and Thr-95. NAD(+) contacts are provided by Trp-92 and Thr-95. The disordered stretch occupies residues 113 to 143; it reads PQQNSPVLEKPGRKRKWAEQKQDISEKKSLE. A Phosphoserine modification is found at Ser-117. The short motif at 123–129 is the Nuclear localization signal element; it reads PGRKRKW. Residues 129-143 are compositionally biased toward basic and acidic residues; the sequence is WAEQKQDISEKKSLE. Positions 158, 160, 170, 171, 217, and 221 each coordinate NAD(+). 158–160 contributes to the ATP binding site; it reads GAD. Residues Leu-170 and Trp-171 each contribute to the beta-nicotinamide D-ribonucleotide site. 226 to 229 contributes to the ATP binding site; it reads TKIR.

The protein belongs to the eukaryotic NMN adenylyltransferase family. As to quaternary structure, homohexamer. Interacts with ADPRT/PARP1. Zn(2+) is required as a cofactor. The cofactor is Mg(2+).

Its subcellular location is the nucleus. It catalyses the reaction beta-nicotinamide D-ribonucleotide + ATP + H(+) = diphosphate + NAD(+). It carries out the reaction nicotinate beta-D-ribonucleotide + ATP + H(+) = deamido-NAD(+) + diphosphate. It functions in the pathway cofactor biosynthesis; NAD(+) biosynthesis; NAD(+) from nicotinamide D-ribonucleotide: step 1/1. The protein operates within cofactor biosynthesis; NAD(+) biosynthesis; deamido-NAD(+) from nicotinate D-ribonucleotide: step 1/1. Activity is strongly inhibited by galotannin. Inhibited by P1-(adenosine-5')-P4-(nicotinic-acid-riboside-5')-tetraphosphate (Nap4AD). Its function is as follows. Catalyzes the formation of NAD(+) from nicotinamide mononucleotide (NMN) and ATP. Can also use the deamidated form; nicotinic acid mononucleotide (NaMN) as substrate with the same efficiency. Can use triazofurin monophosphate (TrMP) as substrate. Also catalyzes the reverse reaction, i.e. the pyrophosphorolytic cleavage of NAD(+). For the pyrophosphorolytic activity, prefers NAD(+) and NaAD as substrates and degrades NADH, nicotinic acid adenine dinucleotide phosphate (NHD) and nicotinamide guanine dinucleotide (NGD) less effectively. Involved in the synthesis of ATP in the nucleus, together with PARP1, PARG and NUDT5. Nuclear ATP generation is required for extensive chromatin remodeling events that are energy-consuming. Fails to cleave phosphorylated dinucleotides NADP(+), NADPH and NaADP(+). Also acts as a cofactor for glutamate and aspartate ADP-ribosylation by directing PARP1 catalytic activity to glutamate and aspartate residues on histones. Protects against axonal degeneration following mechanical or toxic insults. Delays axonal degeneration after axotomy. Results in a &gt;10-fold increase in intact neurites 72 hours after injury. Neural protection does not correlate with cellular NAD(+) levels but may still require enzyme activity. The chain is Nicotinamide/nicotinic acid mononucleotide adenylyltransferase 1 (NMNAT1) from Bos taurus (Bovine).